The chain runs to 34 residues: Photosystem II reaction center protein T (34 aa).

A helical transmembrane segment spans residues 3–23 (ALVYTFLLVSTLGIIFFAIFF).

This sequence belongs to the PsbT family. In terms of assembly, PSII is composed of 1 copy each of membrane proteins PsbA, PsbB, PsbC, PsbD, PsbE, PsbF, PsbH, PsbI, PsbJ, PsbK, PsbL, PsbM, PsbT, PsbY, PsbZ, Psb30/Ycf12, at least 3 peripheral proteins of the oxygen-evolving complex and a large number of cofactors. It forms dimeric complexes.

The protein localises to the plastid. Its subcellular location is the chloroplast thylakoid membrane. Functionally, found at the monomer-monomer interface of the photosystem II (PS II) dimer, plays a role in assembly and dimerization of PSII. PSII is a light-driven water plastoquinone oxidoreductase, using light energy to abstract electrons from H(2)O, generating a proton gradient subsequently used for ATP formation. This is Photosystem II reaction center protein T from Atropa belladonna (Belladonna).